Consider the following 716-residue polypeptide: Hepatocyte growth factor-like protein (716 aa).

The signal sequence occupies residues Met1–Gly18. Positions Gln19–Asp105 constitute a PAN domain. Disulfide bonds link Cys56–Cys78, Cys60–Cys66, Cys110–Cys186, Cys131–Cys169, Cys157–Cys181, Cys191–Cys268, Cys194–Cys333, Cys212–Cys251, Cys240–Cys263, Cys292–Cys370, Cys313–Cys352, Cys341–Cys364, Cys379–Cys457, Cys400–Cys440, Cys428–Cys452, Cys477–Cys593, Cys512–Cys528, Cys607–Cys672, Cys637–Cys651, and Cys662–Cys690. The N-linked (GlcNAc...) asparagine glycan is linked to Asn72. Kringle domains are found at residues Cys110–Cys186, Cys191–Cys268, Cys292–Cys370, and Cys379–Cys457. An N-linked (GlcNAc...) asparagine glycan is attached at Asn173. An N-linked (GlcNAc...) asparagine glycan is attached at Asn305. Positions Val489 to Gln714 constitute a Peptidase S1 domain. Asn620 carries an N-linked (GlcNAc...) asparagine glycan.

This sequence belongs to the peptidase S1 family. Plasminogen subfamily. As to quaternary structure, dimer of an alpha chain and a beta chain linked by a disulfide bond. Interacts (via beta chain) with MST1R (via SEMA domain). Cleaved after Arg-488, probably by HPN/Hepsin, to yield the active form consisting of two disulfide-linked chains. As to expression, liver. Lower levels in lung, placenta and adrenal.

It is found in the secreted. The protein is Hepatocyte growth factor-like protein (Mst1) of Mus musculus (Mouse).